The primary structure comprises 308 residues: Putative mitochondrial transporter UCP3 (308 aa).

Topologically, residues 1–10 (MVGLQPSEVP) are mitochondrial intermembrane. Residues 11–32 (PTTVVKFLGAGTAACFADLLTF) form a helical membrane-spanning segment. Solcar repeat units lie at residues 11–102 (PTTV…VKQF), 111–202 (SSVA…IKEK), and 211–296 (DNFP…LKRA). Residues 33 to 73 (PLDTAKVRLQIQGENPGAQSVQYRGVLGTILTMVRTEGPRS) lie on the Mitochondrial matrix side of the membrane. The helical transmembrane segment at 74–96 (PYSGLVAGLHRQMSFASIRIGLY) threads the bilayer. Over 97-116 (DSVKQFYTPKGADHSSVAIR) the chain is Mitochondrial intermembrane. Residues 117-133 (ILAGCTTGAMAVTCAQP) traverse the membrane as a helical segment. Residues 134–179 (TDVVKVRFQAMIRLGTGGERKYRGTMDAYRTIAREEGVRGLWKGTW) lie on the Mitochondrial matrix side of the membrane. Residues 180-196 (PNITRNAIVNCAEMVTY) traverse the membrane as a helical segment. Residues 197–213 (DIIKEKLLESHLFTDNF) lie on the Mitochondrial intermembrane side of the membrane. Residues 214 to 233 (PCHFVSAFGAGFCATVVASP) traverse the membrane as a helical segment. Over 234-267 (VDVVKTRYMNAPLGRYRSPLHCMLKMVAQEGPTA) the chain is Mitochondrial matrix. A helical membrane pass occupies residues 268 to 290 (FYKGFVPSFLRLGAWNVMMFVTY). Residues 275–297 (SFLRLGAWNVMMFVTYEQLKRAL) are purine nucleotide binding. Over 291–308 (EQLKRALMKVQVLRESPF) the chain is Mitochondrial intermembrane.

It belongs to the mitochondrial carrier (TC 2.A.29) family. As to quaternary structure, interacts with HAX1; the interaction is direct and calcium-dependent.

Its subcellular location is the mitochondrion inner membrane. Its activity is regulated as follows. Inhibited by purine nucleotides and inorganic phosphate (in vitro). Putative transmembrane transporter that plays a role in mitochondrial metabolism via an as yet unclear mechanism. Originally, this mitochondrial protein was thought to act as a proton transmembrane transporter from the mitochondrial intermembrane space into the matrix, causing proton leaks through the inner mitochondrial membrane, thereby uncoupling mitochondrial membrane potential generation from ATP synthesis. However, this function is controversial and uncoupling may not be the function, or at least not the main function, but rather a consequence of more conventional metabolite transporter activity. This Mus musculus (Mouse) protein is Putative mitochondrial transporter UCP3.